Reading from the N-terminus, the 783-residue chain is Polyribonucleotide nucleotidyltransferase 1, mitochondrial (783 aa).

A mitochondrion-targeting transit peptide spans 1–45 (MAACRLCCLCPCLRPLGCGPLGRPGRNRALSYLQMRALWSSTGSR). An N6-acetyllysine mark is found at Lys250, Lys264, and Lys285. N6-succinyllysine is present on Lys552. The KH domain occupies 605 to 664 (PVVETVKVPLSKRAKFVGPGGYHLKKLQAETGVTISQVDEETFSIFAPTPTAMHEARDFI). One can recognise an S1 motif domain in the interval 679–750 (GAVYTATITE…ADGRMRLSRK (72 aa)). Ser754 carries the phosphoserine modification.

Belongs to the polyribonucleotide nucleotidyltransferase family. Homotrimer; in free form. Homooligomer. Component of the mitochondrial degradosome (mtEXO) complex which is a heteropentamer containing 2 copies of SUPV3L1 and 3 copies of PNPT1. As part of the mitochondrial degradosome complex, interacts with GRSF1 in an RNA-dependent manner; the interaction enhances the activity of the complex. Interacts with TCL1A; the interaction has no effect on PNPT1 exonuclease activity.

Its subcellular location is the cytoplasm. The protein resides in the mitochondrion matrix. It localises to the mitochondrion intermembrane space. It carries out the reaction RNA(n+1) + phosphate = RNA(n) + a ribonucleoside 5'-diphosphate. Its function is as follows. RNA-binding protein implicated in numerous RNA metabolic processes. Catalyzes the phosphorolysis of single-stranded polyribonucleotides processively in the 3'-to-5' direction. Mitochondrial intermembrane factor with RNA-processing exoribonulease activity. Component of the mitochondrial degradosome (mtEXO) complex, that degrades 3' overhang double-stranded RNA with a 3'-to-5' directionality in an ATP-dependent manner. Involved in the degradation of non-coding mitochondrial transcripts (MT-ncRNA) and tRNA-like molecules. Required for correct processing and polyadenylation of mitochondrial mRNAs. Plays a role as a cytoplasmic RNA import factor that mediates the translocation of small RNA components, like the 5S RNA, the RNA subunit of ribonuclease P and the mitochondrial RNA-processing (MRP) RNA, into the mitochondrial matrix. Plays a role in mitochondrial morphogenesis and respiration; regulates the expression of the electron transport chain (ETC) components at the mRNA and protein levels. In the cytoplasm, shows a 3'-to-5' exoribonuclease mediating mRNA degradation activity; degrades c-myc mRNA upon treatment with IFNB1/IFN-beta, resulting in a growth arrest in melanoma cells. Regulates the stability of specific mature miRNAs in melanoma cells; specifically and selectively degrades miR-221, preferentially. Also plays a role in RNA cell surveillance by cleaning up oxidized RNAs. Binds to the RNA subunit of ribonuclease P, MRP RNA and miR-221 microRNA. The protein is Polyribonucleotide nucleotidyltransferase 1, mitochondrial (Pnpt1) of Mus musculus (Mouse).